The chain runs to 322 residues: Malate dehydrogenase 1 (322 aa).

NAD(+)-binding positions include 10–15 (GSGQIG) and Asp-34. Substrate is bound by residues Arg-83 and Arg-89. NAD(+) is bound by residues Asn-96 and 119 to 121 (ITN). The substrate site is built by Asn-121 and Arg-152. Catalysis depends on His-176, which acts as the Proton acceptor.

It belongs to the LDH/MDH superfamily. MDH type 3 family.

The enzyme catalyses (S)-malate + NAD(+) = oxaloacetate + NADH + H(+). Catalyzes the reversible oxidation of malate to oxaloacetate. This chain is Malate dehydrogenase 1, found in Rhodopseudomonas palustris (strain BisB18).